The sequence spans 371 residues: MFTPPTDPKKSVKVKVSQLCELCHARKAVMKRPKNLQRICKECFFSVFETEIHNTIVSNNLFHRGERIAVGASGGKDSTVLAYVLKLLNDRHDYGVEIVLLSIDEGIVGYRDDSLATVKRNQVQYDLPLEIVSYKDLYNWTMDEIVACAGIRNSCTYCGVFRRQALDRGAAKLGIKHVVTGHNADDMAETVLMNILRGDVARLEKSTSILTQSSGSPIKRSKPFKYSYQKEIVLYAHYKKLDYFSTECSYAPEAFRGTARELMKNLEAIRPSCIIDIIHSGESLKLKPKRAKKAPPPSHMEIRPDGSVSLQNEFIDGNRCERCGYLSSNKICKACMLLEGLEQNRAKIQLEKDSTTEGAAKLSRTLEKLQF.

The protein belongs to the TtcA family. CTU1/NCS6/ATPBD3 subfamily.

It is found in the cytoplasm. The protein operates within tRNA modification; 5-methoxycarbonylmethyl-2-thiouridine-tRNA biosynthesis. Functionally, plays a central role in 2-thiolation of mcm(5)S(2)U at tRNA wobble positions of tRNA(Lys), tRNA(Glu) and tRNA(Gln). Directly binds tRNAs and probably acts by catalyzing adenylation of tRNAs, an intermediate required for 2-thiolation. It is unclear whether it acts as a sulfurtransferase that transfers sulfur from thiocarboxylated URM1 onto the uridine of tRNAs at wobble position. Prior mcm(5) tRNA modification by the elongator complex is required for 2-thiolation. May also be involved in protein urmylation. This chain is Cytoplasmic tRNA 2-thiolation protein 1, found in Kluyveromyces lactis (strain ATCC 8585 / CBS 2359 / DSM 70799 / NBRC 1267 / NRRL Y-1140 / WM37) (Yeast).